The primary structure comprises 1547 residues: MANLRSVFEQLNDVSLRAVIQEEAYRDIKLTIKETKTYNPYAHPVAVADSLEKLGIETNPFAVKAHTHAAAKTIELDMYKIVSFYLPKENPTTFMFMKRSKLQYFRRGPQQKDVFLNAHIEPKDVARYDVDTLFDKNVTPQITTNTAFMGDTLHFLPLTAIERIFKSSPKLQTLYATMVLPPEALHRLHSLHPGIYELEFHQEHFIYKPGGHAGAAYIHKYEQLEWIKVGRFKWADEKGLTHMVTSQILETKGANHLFIFQRGRFLTPELRCFSTETKYVTMPPIFLPKQFNARLPIKKTTAQQLFLYVKSVKNVTERDIWAKMRQLLKTSELQDYNPREVTLLVNYFLLIARLRSETCFDNVLSGGMFKKLFKPFIAWWEIQKHKIFGNEEFEQLMEALEWVDVTLTYPTKTFDNRGWVVKLEARRGYEWFADEMHKPKGPELNLEEKKTDPDAASYEKYLKALSLLQKEPEVMEAKEAEATDEPQRPEVKEEQAEASTSGRAEEIQEDPATKKGKEEPNPNRDLLCPCGLHLKIKNAEFPELPVLDHPDHLTGRKAWFFSKDGKPYSYTGGSHASRGWPNWLEKILAAIEIKEPLPEFNQCLVQQFKLQAAIPFHRDDEPCYPKGHQVLTINHSGECLTQIACQKGKASITMGFGDYYLSPVGFQESHKHAVSNTTGGRVSLTFRCTVQQNKFNDDGSMEALDNLPWKAWIPKLQNLGFQGRQLQYDPNGALISPIEEIRSMPKCKPEGVPEVVYKTLDGLARAPTPYSPNPIRARAYTSDVKNCRIGALLRQQGKEWGCRFDALVEAGKRELAISVIHGAGGSGKSQALQTLIKDNPELDITVVLPTNELRLDWLRKLPKAPQEKFKTFEKALLAPPTPIVIFDDYGKLPAGYVEAFCLYFSTVQLIILTGDCKQSVHHESNENATTSSIEPLVKEASELCRYYINATHRNKKDLANKLGVYSEKTGLTEVTHGTTPIPGLHMLVPSLYKKQAFSEMGHKVSTYAGCQGITAPKIQILLTEETSLCSREVLYTALSRAVHSIHFVNASPNNQAFWKKLECTPYLKAFLSTLREEVAQPIEEKKAEPTPVEPPRTHIAKEDAMVEYENVIEKMPEKHEREIFSEKHGHSNCVQTEDPFIQMFSHQQAKDDTLLWATIEARLVISNPKANWQEYLEKRPVGEVLFESYKRAMHLPKMPIPFEEDLWNSSMHEVQKTYLSKPENMIKNGMARQSPDYDPNVISLFLKSQWVKKMEKLGAIKIKPGQTIASFHQATVMLFGTMARYMRRMREVFQPAHIRINCEMTPEDLSSWAAGEGGHWKFKGPSLANDFTAFDQSQDGAMLQFEILKARHHSIPEDILDAYLTIKTNSKIFLGTLAIMRLTGEGPTFDANTECNIAFTHTKFNIPEGTAQLYAGDDSAIDGLPALRPSFKMIEQKLTLRSKPQVALQQKGDWAEFCGFRITPKGLIKDPKKLHASWMLEKKKGNVKNVLRSYELDLALAYQHKDSLHELLSEEELKYHYETVRSIVKSGGGGVLNTYISKDESLY.

An Alphavirus-like MT domain is found at 59 to 227 (NPFAVKAHTH…IHKYEQLEWI (169 aa)). 2 stretches are compositionally biased toward basic and acidic residues: residues 477–495 (AKEA…KEEQ) and 503–522 (RAEE…EPNP). Residues 477 to 523 (AKEAEATDEPQRPEVKEEQAEASTSGRAEEIQEDPATKKGKEEPNPN) are disordered. The region spanning 599–690 (EFNQCLVQQF…RVSLTFRCTV (92 aa)) is the Fe2OG dioxygenase domain. The (+)RNA virus helicase ATP-binding domain maps to 793–948 (LRQQGKEWGC…EASELCRYYI (156 aa)). ATP is bound at residue 822 to 829 (GAGGSGKS). The region spanning 949-1082 (NATHRNKKDL…TLREEVAQPI (134 aa)) is the (+)RNA virus helicase C-terminal domain. The 108-residue stretch at 1324-1431 (GPSLANDFTA…DGLPALRPSF (108 aa)) folds into the RdRp catalytic domain.

It belongs to the potexvirus/carlavirus RNA replication protein family.

It catalyses the reaction RNA(n) + a ribonucleoside 5'-triphosphate = RNA(n+1) + diphosphate. The enzyme catalyses ATP + H2O = ADP + phosphate + H(+). In terms of biological role, RNA replication. The central part of this protein possibly functions as an ATP-binding helicase. The sequence is that of RNA replication protein from Papaya mosaic potexvirus (PMV).